We begin with the raw amino-acid sequence, 338 residues long: Taste receptor type 2 member 39 (338 aa).

The Extracellular segment spans residues 1–30 (MLGRCFPPNTKEKQQLRMIKLCDPAESELS). A helical transmembrane segment spans residues 31–51 (PFLITLTLAVLLAEYLTGIIA). Topologically, residues 52 to 74 (NGFITAIHAAEWVQNKSVSTSGR) are cytoplasmic. Residues 75–95 (ILVFLSVSRIALQSLMMLEIT) traverse the membrane as a helical segment. Residues 96–116 (ISSTSLSFYSEDAVYYAFKIS) lie on the Extracellular side of the membrane. A helical membrane pass occupies residues 117–137 (FIFLNFCSLWFAAWLSFFYFV). At 138–156 (KIANFSYPLFLKLRWRISG) the chain is on the cytoplasmic side. Residues 157–177 (LIPWLLWLSVFISFSHSMFCI) traverse the membrane as a helical segment. The Extracellular segment spans residues 178-205 (NICTGYCDNSFPIHSSNSTEKTYFSEIS). Asparagine 194 carries an N-linked (GlcNAc...) asparagine glycan. Residues 206–226 (VVSLAFFFNLGIVIPLIMFIL) traverse the membrane as a helical segment. Topologically, residues 227–262 (AAILLILSLKRHTLHMGSNATGSKDPSMEAHIGAIK) are cytoplasmic. Residues 263–283 (ATSYFLILYIFNAVALFIYLS) form a helical membrane-spanning segment. Topologically, residues 284-291 (NMFDINSL) are extracellular. Residues 292–312 (WNTLCQIIMAAYPASHSILLI) form a helical membrane-spanning segment. The Cytoplasmic portion of the chain corresponds to 313-338 (KDNPGLRRAWKQLQHRLHLYPKQWTL).

It belongs to the G-protein coupled receptor T2R family.

The protein localises to the membrane. In terms of biological role, receptor that may play a role in the perception of bitterness and is gustducin-linked. May play a role in sensing the chemical composition of the gastrointestinal content. The activity of this receptor may stimulate alpha gustducin, mediate PLC-beta-2 activation and lead to the gating of TRPM5. In Macaca mulatta (Rhesus macaque), this protein is Taste receptor type 2 member 39 (TAS2R39).